The primary structure comprises 112 residues: Nucleoid-associated protein FTH_1374 (112 aa).

The disordered stretch occupies residues 1–27 (MNFDMSKLMQQAQKMQEQMKKAQQERE). Over residues 17–27 (EQMKKAQQERE) the composition is skewed to basic and acidic residues.

It belongs to the YbaB/EbfC family. In terms of assembly, homodimer.

It is found in the cytoplasm. The protein localises to the nucleoid. Its function is as follows. Binds to DNA and alters its conformation. May be involved in regulation of gene expression, nucleoid organization and DNA protection. This Francisella tularensis subsp. holarctica (strain OSU18) protein is Nucleoid-associated protein FTH_1374.